The sequence spans 144 residues: MFFGTYTPKLDDKGRLTLPAKFRDALAGGLMVTKSQDHSLAVHPRAEFEEMIAEISAKAKRGNPQARAYLRNLAASTDEQYPDAQGRITLSAEHRRYANLTKECVVTGSIGFLEIWDAQAWQDYQELHEENFSAASDEALGDIL.

SpoVT-AbrB domains are found at residues 5–47 (TYTP…PRAE) and 77–120 (TDEQ…DAQA).

It belongs to the MraZ family. In terms of assembly, forms oligomers.

It localises to the cytoplasm. Its subcellular location is the nucleoid. The protein is Transcriptional regulator MraZ of Mycolicibacterium vanbaalenii (strain DSM 7251 / JCM 13017 / BCRC 16820 / KCTC 9966 / NRRL B-24157 / PYR-1) (Mycobacterium vanbaalenii).